Consider the following 676-residue polypeptide: tRNA uridine 5-carboxymethylaminomethyl modification enzyme MnmG (676 aa).

15–20 (GAGHAG) is an FAD binding site. 316 to 330 (GPRYCPSIEDKIVRF) contacts NAD(+).

The protein belongs to the MnmG family. As to quaternary structure, homodimer. Heterotetramer of two MnmE and two MnmG subunits. Requires FAD as cofactor.

Its subcellular location is the cytoplasm. Functionally, NAD-binding protein involved in the addition of a carboxymethylaminomethyl (cmnm) group at the wobble position (U34) of certain tRNAs, forming tRNA-cmnm(5)s(2)U34. This chain is tRNA uridine 5-carboxymethylaminomethyl modification enzyme MnmG, found in Roseiflexus castenholzii (strain DSM 13941 / HLO8).